Here is a 586-residue protein sequence, read N- to C-terminus: Arginine--tRNA ligase (586 aa).

The 'HIGH' region signature appears at 130–140; that stretch reads ANPTGPMHVGH.

It belongs to the class-I aminoacyl-tRNA synthetase family. In terms of assembly, monomer.

Its subcellular location is the cytoplasm. It catalyses the reaction tRNA(Arg) + L-arginine + ATP = L-arginyl-tRNA(Arg) + AMP + diphosphate. The polypeptide is Arginine--tRNA ligase (Methylobacterium sp. (strain 4-46)).